The chain runs to 355 residues: UDP-N-acetylglucosamine--N-acetylmuramyl-(pentapeptide) pyrophosphoryl-undecaprenol N-acetylglucosamine transferase (355 aa).

UDP-N-acetyl-alpha-D-glucosamine contacts are provided by residues 15–17 (TGG), asparagine 127, arginine 163, serine 191, isoleucine 244, 263–268 (ALTVSE), and glutamine 288.

The protein belongs to the glycosyltransferase 28 family. MurG subfamily.

The protein resides in the cell inner membrane. It catalyses the reaction di-trans,octa-cis-undecaprenyl diphospho-N-acetyl-alpha-D-muramoyl-L-alanyl-D-glutamyl-meso-2,6-diaminopimeloyl-D-alanyl-D-alanine + UDP-N-acetyl-alpha-D-glucosamine = di-trans,octa-cis-undecaprenyl diphospho-[N-acetyl-alpha-D-glucosaminyl-(1-&gt;4)]-N-acetyl-alpha-D-muramoyl-L-alanyl-D-glutamyl-meso-2,6-diaminopimeloyl-D-alanyl-D-alanine + UDP + H(+). The protein operates within cell wall biogenesis; peptidoglycan biosynthesis. Its function is as follows. Cell wall formation. Catalyzes the transfer of a GlcNAc subunit on undecaprenyl-pyrophosphoryl-MurNAc-pentapeptide (lipid intermediate I) to form undecaprenyl-pyrophosphoryl-MurNAc-(pentapeptide)GlcNAc (lipid intermediate II). The polypeptide is UDP-N-acetylglucosamine--N-acetylmuramyl-(pentapeptide) pyrophosphoryl-undecaprenol N-acetylglucosamine transferase (Salmonella gallinarum (strain 287/91 / NCTC 13346)).